The primary structure comprises 558 residues: Alpha-1,3-mannosyltransferase MNT2 (558 aa).

Topologically, residues 1–6 (MRRKNR) are cytoplasmic. A helical; Signal-anchor for type II membrane protein transmembrane segment spans residues 7 to 27 (LFILVVLLGIVLVVYYSQLNS). The Lumenal segment spans residues 28–558 (LDLVEPVQSS…QIVDIWNKDI (531 aa)). An N-linked (GlcNAc...) asparagine glycan is attached at asparagine 187.

This sequence belongs to the MNN1/MNT family.

Its subcellular location is the golgi apparatus membrane. It functions in the pathway protein modification; protein glycosylation. Its function is as follows. Mannosyltransferase involved in adding the 4th and 5th mannose residues of O-linked glycans. In Saccharomyces cerevisiae (strain ATCC 204508 / S288c) (Baker's yeast), this protein is Alpha-1,3-mannosyltransferase MNT2 (MNT2).